We begin with the raw amino-acid sequence, 541 residues long: Glucose-6-phosphate isomerase (541 aa).

The active-site Proton donor is the Glu347. Catalysis depends on residues His378 and Lys506.

It belongs to the GPI family.

It is found in the cytoplasm. It catalyses the reaction alpha-D-glucose 6-phosphate = beta-D-fructose 6-phosphate. The protein operates within carbohydrate biosynthesis; gluconeogenesis. Its pathway is carbohydrate degradation; glycolysis; D-glyceraldehyde 3-phosphate and glycerone phosphate from D-glucose: step 2/4. Functionally, catalyzes the reversible isomerization of glucose-6-phosphate to fructose-6-phosphate. The protein is Glucose-6-phosphate isomerase of Francisella tularensis subsp. holarctica (strain OSU18).